Here is an 822-residue protein sequence, read N- to C-terminus: Stemar-13-ene synthase (822 aa).

Residues 1-10 (MMLLSSSYSG) are compositionally biased toward polar residues. Residues 1 to 29 (MMLLSSSYSGGQFPGVSPLGTRPKRSTTV) form a disordered region. The Mg(2+) site is built by aspartate 553, aspartate 557, asparagine 698, threonine 702, and glutamate 706. The DDXXD motif signature appears at 553–557 (DDLFD).

Belongs to the terpene synthase family. Requires Mg(2+) as cofactor.

The catalysed reaction is 9alpha-copalyl diphosphate = stemar-13-ene + diphosphate. In terms of biological role, catalyzes the conversion of syn-copalyl diphosphate to the phytoalexin precursor stemarene. In Oryza sativa subsp. japonica (Rice), this protein is Stemar-13-ene synthase (KSL8).